We begin with the raw amino-acid sequence, 165 residues long: Protein NKG7 (165 aa).

The next 4 helical transmembrane spans lie at 9–29, 61–81, 92–112, and 133–153; these read LLTS…NFWF, FCIL…MSCI, IVST…MTVY, and FYLG…SLGA.

It belongs to the PMP-22/EMP/MP20 family.

The protein localises to the cell membrane. It localises to the cytolytic granule membrane. In terms of biological role, regulates cytotoxic granule exocytosis in effector lymphocytes, thus acting as a critical mediator of inflammation in a broad range of infectious and non-infectious diseases. Essential for cytotoxic degranulation of natural killer (NK) cells and CD8(+) T-cells and for the activation of CD4(+) T-cells following infection. Plays a critical role in CD8(+) T-cell and NK cell-mediated cytolysis of target cells and contributes to the cytolytic activity via the perforin/granzyme pathway by enhancing exocytosis of LAMP1-carrying lytic granules. Contributes to NK cell-mediated control of cancer metastasis. The polypeptide is Protein NKG7 (NKG7) (Bos taurus (Bovine)).